Consider the following 785-residue polypeptide: Protein SEY1 (785 aa).

Positions 1–31 (MASAAPINLRAQDTPYVPPTSLPTSSSQTGS) are disordered. Residues 1–689 (MASAAPINLR…KRSTVASIAQ (689 aa)) are Cytoplasmic-facing. Positions 22-31 (LPTSSSQTGS) are enriched in low complexity. The 221-residue stretch at 61–281 (GFSYNIVAVF…SSDYLFKPAY (221 aa)) folds into the GB1/RHD3-type G domain. Residue 71 to 78 (GSQSTGKS) coordinates GTP. A coiled-coil region spans residues 458–482 (SWEEELELLRDEIRAVADQCRKDET). A helical membrane pass occupies residues 690 to 710 (IPYWIYGVLVVLGWNEAMLVL). The Lumenal portion of the chain corresponds to 711–713 (FNP). A helical transmembrane segment spans residues 714 to 734 (LYFAFLLLAMATSYIIAQLGL). At 735-785 (VGPLFQVTRTVGSEIQRQATARLREHFSQPVLAEPVQVGPSRDREEVGQIQ) the chain is on the cytoplasmic side.

Belongs to the TRAFAC class dynamin-like GTPase superfamily. GB1/RHD3 GTPase family. RHD3 subfamily.

The protein resides in the endoplasmic reticulum membrane. Its function is as follows. Cooperates with the reticulon proteins and tubule-shaping DP1 family proteins to generate and maintain the structure of the tubular endoplasmic reticulum network. Has GTPase activity, which is required for its function in ER organization. The sequence is that of Protein SEY1 from Laccaria bicolor (strain S238N-H82 / ATCC MYA-4686) (Bicoloured deceiver).